A 166-amino-acid polypeptide reads, in one-letter code: NADH-quinone oxidoreductase subunit A (166 aa).

The next 3 membrane-spanning stretches (helical) occupy residues F16–F36, F68–W88, and I98–V118. Residues R141–R166 form a disordered region.

It belongs to the complex I subunit 3 family. NDH-1 is composed of 13 different subunits. Subunits NuoA, H, J, K, L, M, N constitute the membrane sector of the complex.

Its subcellular location is the cell inner membrane. The enzyme catalyses a quinone + NADH + 5 H(+)(in) = a quinol + NAD(+) + 4 H(+)(out). Functionally, NDH-1 shuttles electrons from NADH, via FMN and iron-sulfur (Fe-S) centers, to quinones in the respiratory chain. The immediate electron acceptor for the enzyme in this species is believed to be ubiquinone. Couples the redox reaction to proton translocation (for every two electrons transferred, four hydrogen ions are translocated across the cytoplasmic membrane), and thus conserves the redox energy in a proton gradient. This chain is NADH-quinone oxidoreductase subunit A, found in Yersinia pseudotuberculosis serotype IB (strain PB1/+).